The primary structure comprises 591 residues: uncharacterized protein (591 aa).

Helical transmembrane passes span 389 to 409 (VYLGSYFAGASGLVIAGSALI), 411 to 431 (GGSPWFGLGLAGVGILAGGIL), 538 to 558 (GILPEWALWLITIVIGLFALS), and 571 to 591 (PIISIIVVIAILYALTYFNLL).

The protein localises to the membrane. This is an uncharacterized protein from Mycoplasma (Bacteriophage L2).